Reading from the N-terminus, the 225-residue chain is Heptaprenylglyceryl phosphate synthase (225 aa).

Lys6 lines the sn-glycerol 1-phosphate pocket. Mg(2+)-binding residues include Asp8 and Thr34. Residues 153 to 158 (YVEYSG), Gly183, and 203 to 204 (GN) contribute to the sn-glycerol 1-phosphate site.

The protein belongs to the GGGP/HepGP synthase family. Group I subfamily. Homodimer. It depends on Mg(2+) as a cofactor.

It carries out the reaction sn-glycerol 1-phosphate + all-trans-heptaprenyl diphosphate = 3-heptaprenyl-sn-glycero-1-phosphate + diphosphate. It participates in membrane lipid metabolism; glycerophospholipid metabolism. In terms of biological role, prenyltransferase that catalyzes in vivo the transfer of the heptaprenyl moiety of heptaprenyl pyrophosphate (HepPP; 35 carbon atoms) to the C3 hydroxyl of sn-glycerol-1-phosphate (G1P), producing heptaprenylglyceryl phosphate (HepGP). This reaction is an ether-bond-formation step in the biosynthesis of archaea-type G1P-based membrane lipids found in Bacillales. This is Heptaprenylglyceryl phosphate synthase from Listeria monocytogenes serotype 4a (strain HCC23).